Reading from the N-terminus, the 329-residue chain is Sex comb on midleg-like protein 1 (329 aa).

Phosphoserine occurs at positions 138 and 238. Positions 258–325 (WSVEAVVLFL…YYIDRLKQGK (68 aa)) constitute an SAM domain.

The protein belongs to the SCM family.

It localises to the nucleus. Putative Polycomb group (PcG) protein. PcG proteins act by forming multiprotein complexes, which are required to maintain the transcriptionally repressive state of homeotic genes throughout development. May be involved in spermatogenesis during sexual maturation. The polypeptide is Sex comb on midleg-like protein 1 (SCML1) (Hoolock hoolock (Western hoolock gibbon)).